Consider the following 468-residue polypeptide: Pituitary adenylate cyclase-activating polypeptide type I receptor (468 aa).

An N-terminal signal peptide occupies residues 1–20 (MAGVVHVSLAALLLLPMAPA). The Extracellular portion of the chain corresponds to 21 to 152 (MHSDCIFKKE…TGDQDYYYLS (132 aa)). 3 disulfide bridges follow: cysteine 34–cysteine 63, cysteine 54–cysteine 118, and cysteine 77–cysteine 134. N-linked (GlcNAc...) asparagine glycans are attached at residues asparagine 48, asparagine 60, and asparagine 117. The tract at residues 125 to 139 (EPFPHYFDACGFDEY) is important for ADCYAP1/PACAP ligand binding and specificity. The helical transmembrane segment at 153 to 177 (VKALYTVGYSTSLVTLTTAMVILCR) threads the bilayer. The Cytoplasmic segment spans residues 178 to 187 (FRKLHCTRNF). A helical membrane pass occupies residues 188–208 (IHMNLFVSFMLRAISVFIKDW). At 209–223 (ILYAEQDSNHCFIST) the chain is on the extracellular side. Residues 224 to 249 (VECKAVMVFFHYCVVSNYFWLFIEGL) form a helical membrane-spanning segment. Cysteines 226 and 296 form a disulfide. Topologically, residues 250-267 (YLFTLLVETFFPERRYFY) are cytoplasmic. The helical transmembrane segment at 268–290 (WYTIIGWGTPTVCVTVWATLRLY) threads the bilayer. Over 291–302 (FDDTGCWDMNDS) the chain is Extracellular. Asparagine 300 carries an N-linked (GlcNAc...) asparagine glycan. The chain crosses the membrane as a helical span at residues 303–329 (TALWWVIKGPVVGSIMVNFVLFIGIIV). Residues 330-347 (ILVQKLQSPDMGGNESSI) are Cytoplasmic-facing. The chain crosses the membrane as a helical span at residues 348–374 (YLRLARSTLLLIPLFGIHYTVFAFSPE). N-linked (GlcNAc...) asparagine glycosylation occurs at asparagine 375. Residues 375-379 (NVSKR) lie on the Extracellular side of the membrane. A helical membrane pass occupies residues 380–403 (ERLVFELGLGSFQGFVVAVLYCFL). Residues 404 to 468 (NGEVQAEIKR…SGLPADNLAT (65 aa)) are Cytoplasmic-facing. Phosphoserine occurs at positions 434 and 447.

This sequence belongs to the G-protein coupled receptor 2 family. Interacts with maxadilan, a vasodilator peptide from Lutzomyia longipalpis saliva; the interaction results in ADCYAP1R1 activation. As to expression, most abundant in the brain, low expression in the lung, liver, thymus, spleen, pancreas and placenta.

The protein localises to the cell membrane. With respect to regulation, several synthetic peptides derived from maxadilan, a vasodilator peptide from Lutzomyia longipalpis saliva, act as antagonists for ADCYAP1R1. Functionally, g protein-coupled receptor activated by the neuropeptide pituitary adenylate cyclase-activating polypeptide (ADCYAP1/PACAP). Binds both PACAP27 and PACAP38 bioactive peptides. Ligand binding causes a conformation change that triggers signaling via guanine nucleotide-binding proteins (G proteins) and modulates the activity of downstream effectors. Activates cAMP-dependent pathway. May regulate the release of adrenocorticotropin, luteinizing hormone, growth hormone, prolactin, epinephrine, and catecholamine. May play a role in spermatogenesis and sperm motility. Causes smooth muscle relaxation and secretion in the gastrointestinal tract. The sequence is that of Pituitary adenylate cyclase-activating polypeptide type I receptor from Homo sapiens (Human).